The chain runs to 183 residues: Der GTPase-activating protein YihI (183 aa).

Over residues 1-18 the composition is skewed to low complexity; sequence MNQPSKAPRAPRSSAATP. Residues 1 to 114 form a disordered region; it reads MNQPSKAPRA…EEELAKLEND (114 aa). Residues 25–34 show a composition bias toward basic and acidic residues; that stretch reads RAELDQEARE. The segment covering 56–65 has biased composition (low complexity); sequence NQKNKAAAQA. Over residues 92–114 the composition is skewed to basic and acidic residues; sequence PKAEAKPKPRLTPEEELAKLEND.

Belongs to the YihI family. As to quaternary structure, interacts with Der.

Its function is as follows. A GTPase-activating protein (GAP) that modifies Der/EngA GTPase function. May play a role in ribosome biogenesis. In Serratia proteamaculans (strain 568), this protein is Der GTPase-activating protein YihI.